The chain runs to 96 residues: Pyrimidine/purine nucleoside phosphorylase (96 aa).

It belongs to the nucleoside phosphorylase PpnP family.

It catalyses the reaction a purine D-ribonucleoside + phosphate = a purine nucleobase + alpha-D-ribose 1-phosphate. The catalysed reaction is adenosine + phosphate = alpha-D-ribose 1-phosphate + adenine. The enzyme catalyses cytidine + phosphate = cytosine + alpha-D-ribose 1-phosphate. It carries out the reaction guanosine + phosphate = alpha-D-ribose 1-phosphate + guanine. It catalyses the reaction inosine + phosphate = alpha-D-ribose 1-phosphate + hypoxanthine. The catalysed reaction is thymidine + phosphate = 2-deoxy-alpha-D-ribose 1-phosphate + thymine. The enzyme catalyses uridine + phosphate = alpha-D-ribose 1-phosphate + uracil. It carries out the reaction xanthosine + phosphate = alpha-D-ribose 1-phosphate + xanthine. Its function is as follows. Catalyzes the phosphorolysis of diverse nucleosides, yielding D-ribose 1-phosphate and the respective free bases. Can use uridine, adenosine, guanosine, cytidine, thymidine, inosine and xanthosine as substrates. Also catalyzes the reverse reactions. This Erwinia tasmaniensis (strain DSM 17950 / CFBP 7177 / CIP 109463 / NCPPB 4357 / Et1/99) protein is Pyrimidine/purine nucleoside phosphorylase.